A 209-amino-acid polypeptide reads, in one-letter code: uncharacterized protein (209 aa).

The interval 177 to 209 (DNSDNSSDSDDSDSLDGSDDLNDSDNVDNLFVG) is disordered. Residues 183–202 (SDSDDSDSLDGSDDLNDSDN) show a composition bias toward acidic residues.

This is an uncharacterized protein from Acanthamoeba polyphaga (Amoeba).